We begin with the raw amino-acid sequence, 374 residues long: Autophagy-related protein 18e (374 aa).

4 WD repeats span residues 28 to 66 (KSDL…KKSI), 72 to 117 (ESGF…CLSE), 202 to 242 (AHDS…LLQE), and 247 to 286 (VERA…LSFD).

Belongs to the WD repeat PROPPIN family. In terms of assembly, component of the PI(3,5)P2 regulatory complex at least composed of ATG18, SAC/FIG4, FAB1 and VAC14.

The protein resides in the preautophagosomal structure membrane. It localises to the vacuole membrane. Its function is as follows. The PI(3,5)P2 regulatory complex regulates both the synthesis and turnover of phosphatidylinositol 3,5-bisphosphate (PtdIns(3,5)P2). Required for autophagy. The protein is Autophagy-related protein 18e (ATG18E) of Arabidopsis thaliana (Mouse-ear cress).